Here is a 96-residue protein sequence, read N- to C-terminus: C-C motif chemokine 1 (96 aa).

The first 23 residues, 1 to 23, serve as a signal peptide directing secretion; that stretch reads MQIITTALVCLLLAGMWPEDVDS. Disulfide bonds link Cys33-Cys57, Cys34-Cys73, and Cys49-Cys91. N-linked (GlcNAc...) asparagine glycosylation is present at Asn52.

It belongs to the intercrine beta (chemokine CC) family. Monomer.

The protein resides in the secreted. Cytokine that is chemotactic for monocytes but not for neutrophils. Binds to CCR8. The polypeptide is C-C motif chemokine 1 (CCL1) (Homo sapiens (Human)).